The primary structure comprises 459 residues: Argininosuccinate lyase (459 aa).

It belongs to the lyase 1 family. Argininosuccinate lyase subfamily.

Its subcellular location is the cytoplasm. The catalysed reaction is 2-(N(omega)-L-arginino)succinate = fumarate + L-arginine. Its pathway is amino-acid biosynthesis; L-arginine biosynthesis; L-arginine from L-ornithine and carbamoyl phosphate: step 3/3. The polypeptide is Argininosuccinate lyase (Desulforudis audaxviator (strain MP104C)).